The chain runs to 162 residues: Nucleotide-binding protein CHU_2278 (162 aa).

The protein belongs to the YajQ family.

Nucleotide-binding protein. The chain is Nucleotide-binding protein CHU_2278 from Cytophaga hutchinsonii (strain ATCC 33406 / DSM 1761 / CIP 103989 / NBRC 15051 / NCIMB 9469 / D465).